The primary structure comprises 295 residues: tRNA(Ile)-lysidine synthase (295 aa).

10 to 15 lines the ATP pocket; it reads SGGPDS.

It belongs to the tRNA(Ile)-lysidine synthase family.

It is found in the cytoplasm. The enzyme catalyses cytidine(34) in tRNA(Ile2) + L-lysine + ATP = lysidine(34) in tRNA(Ile2) + AMP + diphosphate + H(+). Ligates lysine onto the cytidine present at position 34 of the AUA codon-specific tRNA(Ile) that contains the anticodon CAU, in an ATP-dependent manner. Cytidine is converted to lysidine, thus changing the amino acid specificity of the tRNA from methionine to isoleucine. The sequence is that of tRNA(Ile)-lysidine synthase from Malacoplasma penetrans (strain HF-2) (Mycoplasma penetrans).